Reading from the N-terminus, the 149-residue chain is D-aminoacyl-tRNA deacylase (149 aa).

A Gly-cisPro motif, important for rejection of L-amino acids motif is present at residues 137–138 (GP).

Belongs to the DTD family. Homodimer.

The protein resides in the cytoplasm. It carries out the reaction glycyl-tRNA(Ala) + H2O = tRNA(Ala) + glycine + H(+). The catalysed reaction is a D-aminoacyl-tRNA + H2O = a tRNA + a D-alpha-amino acid + H(+). In terms of biological role, an aminoacyl-tRNA editing enzyme that deacylates mischarged D-aminoacyl-tRNAs. Also deacylates mischarged glycyl-tRNA(Ala), protecting cells against glycine mischarging by AlaRS. Acts via tRNA-based rather than protein-based catalysis; rejects L-amino acids rather than detecting D-amino acids in the active site. By recycling D-aminoacyl-tRNA to D-amino acids and free tRNA molecules, this enzyme counteracts the toxicity associated with the formation of D-aminoacyl-tRNA entities in vivo and helps enforce protein L-homochirality. The polypeptide is D-aminoacyl-tRNA deacylase (Caldicellulosiruptor bescii (strain ATCC BAA-1888 / DSM 6725 / KCTC 15123 / Z-1320) (Anaerocellum thermophilum)).